The primary structure comprises 302 residues: Cyclin-dependent kinase 1-B (302 aa).

The Protein kinase domain maps to 4–287 (YTKIEKIGEG…ARKAMLHPYF (284 aa)). Residues 10–18 (IGEGTYGVV) and lysine 33 contribute to the ATP site. Threonine 14 carries the post-translational modification Phosphothreonine. Phosphotyrosine; by wee1 and wee2 is present on tyrosine 15. Residue aspartate 128 is the Proton acceptor of the active site. The residue at position 161 (threonine 161) is a Phosphothreonine; by cak. At serine 277 the chain carries Phosphoserine.

It belongs to the protein kinase superfamily. CMGC Ser/Thr protein kinase family. CDC2/CDKX subfamily. As to quaternary structure, forms a stable but non-covalent complex with a regulatory subunit and with a cyclin. Interacts with spdya. Post-translationally, phosphorylation at Tyr-15 by wee1 and wee2 inhibits the protein kinase activity and acts negative regulator of entry into mitosis (G2 to M transition).

It is found in the nucleus. The enzyme catalyses L-seryl-[protein] + ATP = O-phospho-L-seryl-[protein] + ADP + H(+). The catalysed reaction is L-threonyl-[protein] + ATP = O-phospho-L-threonyl-[protein] + ADP + H(+). It catalyses the reaction [DNA-directed RNA polymerase] + ATP = phospho-[DNA-directed RNA polymerase] + ADP + H(+). With respect to regulation, phosphorylation at Thr-14 or Tyr-15 inactivates the enzyme, while phosphorylation at Thr-161 activates it. Plays a key role in the control of the eukaryotic cell cycle by modulating the centrosome cycle as well as mitotic onset; promotes G2-M transition via association with multiple interphase cyclins. During G2 and early mitosis, CDC25A/B/C-mediated dephosphorylation activates CDK1/cyclin complexes which phosphorylate several substrates that trigger at least centrosome separation, Golgi dynamics, nuclear envelope breakdown and chromosome condensation. Once chromosomes are condensed and aligned at the metaphase plate, CDK1 activity is switched off by WEE1- and PKMYT1-mediated phosphorylation to allow sister chromatid separation, chromosome decondensation, reformation of the nuclear envelope and cytokinesis. Catalyzes lamin (LMNA, LMNB1 and LMNB2) phosphorylation at the onset of mitosis, promoting nuclear envelope breakdown. The chain is Cyclin-dependent kinase 1-B (cdk1-b) from Xenopus laevis (African clawed frog).